Consider the following 652-residue polypeptide: Chaperone protein HtpG (652 aa).

Residues 1-351 are a; substrate-binding; sequence MTEHVEQLEF…AQDLSLNVSR (351 aa). Residues 352–568 form a b region; it reads EILQQDRQIQ…VFDFTPMLER (217 aa). The c stretch occupies residues 569–652; sequence MYRASGQPVP…ILTDRLTRTL (84 aa).

The protein belongs to the heat shock protein 90 family. As to quaternary structure, homodimer.

It localises to the cytoplasm. Molecular chaperone. Has ATPase activity. The protein is Chaperone protein HtpG of Nocardia farcinica (strain IFM 10152).